We begin with the raw amino-acid sequence, 250 residues long: MSALLSPDQLEADLRAIGARLYHDQHPFHALLHHGKLDRGQVQAWALNRFEYQRCIPLKDAAILARMEDPALRRIWRQRIVDHDGNSTTDGGIARWLHLTDALGLDRTLVESGRALLPGTRFAVQAYLQFVSEKSLLEAIASSLTELFAPNIIGQRVAGMLKHYDFVSSDALAYFEHRLTEAPRDSDFALDYVKQHADTVEKQALVKAALHFKCSVLWAQLDALHVAYVTPGIVWPDAFVPDRDASRVAA.

Belongs to the PqqC family.

It carries out the reaction 6-(2-amino-2-carboxyethyl)-7,8-dioxo-1,2,3,4,7,8-hexahydroquinoline-2,4-dicarboxylate + 3 O2 = pyrroloquinoline quinone + 2 H2O2 + 2 H2O + H(+). It participates in cofactor biosynthesis; pyrroloquinoline quinone biosynthesis. Ring cyclization and eight-electron oxidation of 3a-(2-amino-2-carboxyethyl)-4,5-dioxo-4,5,6,7,8,9-hexahydroquinoline-7,9-dicarboxylic-acid to PQQ. In Xanthomonas oryzae pv. oryzae (strain PXO99A), this protein is Pyrroloquinoline-quinone synthase.